Here is a 496-residue protein sequence, read N- to C-terminus: Probable 26S proteasome non-ATPase regulatory subunit 3 (496 aa).

Positions 249-428 (ARFLYYLGRI…GYMRSKESTD (180 aa)) constitute a PCI domain. The segment at 458-480 (RYPPKSYGKELESAEERREREQQ) is disordered. Over residues 464-480 (YGKELESAEERREREQQ) the composition is skewed to basic and acidic residues.

This sequence belongs to the proteasome subunit S3 family. In terms of assembly, the 26S proteasome is composed of a core protease, known as the 20S proteasome, capped at one or both ends by the 19S regulatory complex (RC). The RC is composed of at least 18 different subunits in two subcomplexes, the base and the lid, which form the portions proximal and distal to the 20S proteolytic core, respectively.

In terms of biological role, acts as a regulatory subunit of the 26 proteasome which is involved in the ATP-dependent degradation of ubiquitinated proteins. This Anopheles gambiae (African malaria mosquito) protein is Probable 26S proteasome non-ATPase regulatory subunit 3 (Dox-A2).